Consider the following 470-residue polypeptide: Uronate isomerase (470 aa).

This sequence belongs to the metallo-dependent hydrolases superfamily. Uronate isomerase family.

The enzyme catalyses D-glucuronate = D-fructuronate. The catalysed reaction is aldehydo-D-galacturonate = keto-D-tagaturonate. It functions in the pathway carbohydrate metabolism; pentose and glucuronate interconversion. The protein is Uronate isomerase of Shigella boydii serotype 18 (strain CDC 3083-94 / BS512).